A 580-amino-acid chain; its full sequence is N(6)-adenosine-methyltransferase catalytic subunit METTL3 (580 aa).

The interval 1 to 70 (MSDTWSSIQA…PKPSTTSVAP (70 aa)) is disordered. N-acetylserine; alternate is present on S2. Position 2 is a phosphoserine; alternate (S2). Residues 28–37 (QDSGHLDLRN) are compositionally biased toward basic and acidic residues. A phosphoserine mark is found at S43, S48, and S50. Over residues 55 to 67 (APTSSGPKPSTTS) the composition is skewed to low complexity. Glycyl lysine isopeptide (Lys-Gly) (interchain with G-Cter in SUMO1) cross-links involve residues K177, K211, K212, and K215. A disordered region spans residues 198–217 (LASSASEPAKEPAKKSRKHA). Positions 210–215 (AKKSRK) match the Nuclear localization signal motif. A phosphoserine mark is found at S219, S243, and S350. Residues 377-378 (DI) and D395 contribute to the S-adenosyl-L-methionine site. Residues 396 to 410 (PPWDIHMELPYGTLT) are gate loop 1. Interaction with METTL14 stretches follow at residues 450 to 454 (ERVDE) and 464 to 480 (QRIIRTGRTGHWLNHGK). An interphase loop region spans residues 462-479 (QLQRIIRTGRTGHWLNHG). The positively charged region required for RNA-binding stretch occupies residues 465-478 (RIIRTGRTGHWLNH). The gate loop 2 stretch occupies residues 507 to 515 (VRSTSHKPD). S-adenosyl-L-methionine contacts are provided by residues K513, 536 to 539 (RPHN), and 549 to 550 (NQ).

It belongs to the MT-A70-like family. In terms of assembly, heterodimer; heterodimerizes with METTL14 to form an antiparallel heterodimer that constitutes an active methyltransferase. Component of the WMM complex, a N6-methyltransferase complex composed of a catalytic subcomplex, named MAC, and of an associated subcomplex, named MACOM. The MAC subcomplex is composed of METTL3 and METTL14. The MACOM subcomplex is composed of WTAP, ZC3H13, CBLL1/HAKAI, VIRMA, and, in some cases of RBM15 (RBM15 or RBM15B). Interacts with NCBP1/CBP80. Interacts with EIF4E. Interacts with EIF3B. In terms of processing, sumoylation inhibits the N6-adenosine-methyltransferase activity. Sumoylation does not affect subcellular location or interaction with METTL14. Desumoylated by SENP1. Present in both germ cells and somatic cells during testis development (at protein level).

It is found in the nucleus. The protein localises to the nucleus speckle. Its subcellular location is the cytoplasm. It catalyses the reaction an adenosine in mRNA + S-adenosyl-L-methionine = an N(6)-methyladenosine in mRNA + S-adenosyl-L-homocysteine + H(+). Methyltransferase activity is regulated by miRNAs via a sequence pairing mechanism. Methyltransferase activity is inhibited by sumoylation. In terms of biological role, the METTL3-METTL14 heterodimer forms a N6-methyltransferase complex that methylates adenosine residues at the N(6) position of some RNAs and regulates various processes such as the circadian clock, differentiation of embryonic and hematopoietic stem cells, cortical neurogenesis, response to DNA damage, differentiation of T-cells and primary miRNA processing. In the heterodimer formed with METTL14, METTL3 constitutes the catalytic core. N6-methyladenosine (m6A), which takes place at the 5'-[AG]GAC-3' consensus sites of some mRNAs, plays a role in mRNA stability, processing, translation efficiency and editing. M6A acts as a key regulator of mRNA stability: methylation is completed upon the release of mRNA into the nucleoplasm and promotes mRNA destabilization and degradation. In embryonic stem cells (ESCs), m6A methylation of mRNAs encoding key naive pluripotency-promoting transcripts results in transcript destabilization, promoting differentiation of ESCs. M6A regulates the length of the circadian clock: acts as an early pace-setter in the circadian loop by putting mRNA production on a fast-track for facilitating nuclear processing, thereby providing an early point of control in setting the dynamics of the feedback loop. M6A also regulates circadian regulation of hepatic lipid metabolism. M6A regulates spermatogonial differentiation and meiosis and is essential for male fertility and spermatogenesis. Also required for oogenesis. Involved in the response to DNA damage: in response to ultraviolet irradiation, METTL3 rapidly catalyzes the formation of m6A on poly(A) transcripts at DNA damage sites, leading to the recruitment of POLK to DNA damage sites. M6A is also required for T-cell homeostasis and differentiation: m6A methylation of transcripts of SOCS family members (SOCS1, SOCS3 and CISH) in naive T-cells promotes mRNA destabilization and degradation, promoting T-cell differentiation. Inhibits the type I interferon response by mediating m6A methylation of IFNB. M6A also regulates cortical neurogenesis: m6A methylation of transcripts related to transcription factors, neural stem cells, the cell cycle and neuronal differentiation during brain development promotes their destabilization and decay, promoting differentiation of radial glial cells. M6A also takes place in other RNA molecules, such as primary miRNA (pri-miRNAs). Mediates m6A methylation of Xist RNA, thereby participating in random X inactivation: m6A methylation of Xist leads to target YTHDC1 reader on Xist and promote transcription repression activity of Xist. METTL3 mediates methylation of pri-miRNAs, marking them for recognition and processing by DGCR8. Acts as a positive regulator of mRNA translation independently of the methyltransferase activity: promotes translation by interacting with the translation initiation machinery in the cytoplasm. The polypeptide is N(6)-adenosine-methyltransferase catalytic subunit METTL3 (Mus musculus (Mouse)).